We begin with the raw amino-acid sequence, 298 residues long: Chromatin modification-related protein YNG2 (298 aa).

Residues 20–86 are a coiled coil; sequence EVRHLLEEIK…KLVQKLQKEK (67 aa). The segment covering 140–158 has biased composition (polar residues); that stretch reads GFSDSASATPTPRNGSSAT. The segment at 140-206 is disordered; sequence GFSDSASATP…EEIEDPLPYE (67 aa). Residues 174 to 188 show a composition bias toward low complexity; it reads VKGASSSSAQSSSAS. Residues 237-288 form a PHD-type zinc finger; it reads NLYCFCQRVSFGEMIGCDNEDCKYEWFHWSCVGITSPPKDDEIWYCPDCASK. Positions 240, 242, 253, 258, 264, 267, 282, and 285 each coordinate Zn(2+).

It belongs to the ING family. Interacts with H3K4me3 and to a lesser extent with H3K4me2. Component of the NuA4 histone acetyltransferase complex.

It localises to the nucleus. In terms of biological role, component of the NuA4 histone acetyltransferase complex which is involved in transcriptional activation of selected genes principally by acetylation of nucleosomal histone H4 and H2A. The NuA4 complex is also involved in DNA repair. Involved in cell cycle progression and meiosis. The polypeptide is Chromatin modification-related protein YNG2 (YNG2) (Candida albicans (strain SC5314 / ATCC MYA-2876) (Yeast)).